The sequence spans 684 residues: ATP-dependent zinc metalloprotease FtsH (684 aa).

Residues 1–21 (MENKNDMFNKTPKSGKPKMFR) are Cytoplasmic-facing. A helical membrane pass occupies residues 22 to 42 (FNLYWMYGLIFIMLVALYMTN). The Periplasmic portion of the chain corresponds to 43–138 (DSSGTKELGW…QVRFEEGDDA (96 aa)). Residues 139 to 159 (IWNFLVSFGPIILLIGVWMFL) form a helical membrane-spanning segment. The Cytoplasmic portion of the chain corresponds to 160–684 (MRRMSGGTGA…TEENKTGKIA (525 aa)). Residue 236–243 (GPPGTGKT) participates in ATP binding. H459 contributes to the Zn(2+) binding site. Residue E460 is part of the active site. Residues H463 and D534 each contribute to the Zn(2+) site. Over residues 647–662 (EKANGKNKENADKEAE) the composition is skewed to basic and acidic residues. Positions 647–684 (EKANGKNKENADKEAEADATTENVTDTPTEENKTGKIA) are disordered.

The protein in the central section; belongs to the AAA ATPase family. In the C-terminal section; belongs to the peptidase M41 family. In terms of assembly, homohexamer. The cofactor is Zn(2+).

The protein resides in the cell inner membrane. In terms of biological role, acts as a processive, ATP-dependent zinc metallopeptidase for both cytoplasmic and membrane proteins. Plays a role in the quality control of integral membrane proteins. The sequence is that of ATP-dependent zinc metalloprotease FtsH from Parabacteroides distasonis (strain ATCC 8503 / DSM 20701 / CIP 104284 / JCM 5825 / NCTC 11152).